The primary structure comprises 146 residues: MEMDKRMKSLAMTAFFGELSTLDIMALIMSIFKRHPNNTIFSVDKDGQFMIDFEYDNYKASQYLDLTLTPISGDECKTHASSIAEQLACVDIIKEDISEYIKTTPRLKRFIKKYRNRSDTRISRDTEKLKIALAKGIDYEYIKDAC.

A helical membrane pass occupies residues leucine 10 to phenylalanine 32.

The protein belongs to the orthopoxvirus OPG112 family.

The protein resides in the host membrane. Its subcellular location is the host cytoplasm. Contributes to the formation of crescents and immature virions (IV). Interacts with phosphatidylinositol-3-phosphate (PI3P) and phosphatidylinositol-4-phosphate (PI4P) lipids in order to form virion membranes. Mechanistically, mediates proper formation of OPG125-hexamers, and hence the honey comb lattice and spherical immature virus. This chain is Late protein OPG112 (OPG112), found in Bos taurus (Bovine).